Here is a 218-residue protein sequence, read N- to C-terminus: MTLVLASASPRRRALLAVLGIPFVVDPAAIDEPLPERHSHPERIARALARHKATVVAARRPGDWVLAADTVVVFRGRLLGKPESAEEAHAMLRLLRGRWHRVITAVALARGRRRWVDHTTTWVLMRQYSDEDITASIARGEPFDKAGGYAIQDPDLRPVESWRGCYCNVVGLSIWLTWRLLQQAGFPVSTPDERTLPPVCQQCPLAPAEVTSRTANRE.

The Proton acceptor role is filled by D69.

It belongs to the Maf family. YhdE subfamily. A divalent metal cation serves as cofactor.

It localises to the cytoplasm. The catalysed reaction is dTTP + H2O = dTMP + diphosphate + H(+). It carries out the reaction UTP + H2O = UMP + diphosphate + H(+). Functionally, nucleoside triphosphate pyrophosphatase that hydrolyzes dTTP and UTP. May have a dual role in cell division arrest and in preventing the incorporation of modified nucleotides into cellular nucleic acids. The protein is dTTP/UTP pyrophosphatase of Thermomicrobium roseum (strain ATCC 27502 / DSM 5159 / P-2).